The primary structure comprises 265 residues: Putative pyruvate, phosphate dikinase regulatory protein 2 (265 aa).

Residue 150–157 coordinates ADP; it reads GVSRTSKT.

The protein belongs to the pyruvate, phosphate/water dikinase regulatory protein family. PDRP subfamily.

It carries out the reaction N(tele)-phospho-L-histidyl/L-threonyl-[pyruvate, phosphate dikinase] + ADP = N(tele)-phospho-L-histidyl/O-phospho-L-threonyl-[pyruvate, phosphate dikinase] + AMP + H(+). The enzyme catalyses N(tele)-phospho-L-histidyl/O-phospho-L-threonyl-[pyruvate, phosphate dikinase] + phosphate + H(+) = N(tele)-phospho-L-histidyl/L-threonyl-[pyruvate, phosphate dikinase] + diphosphate. Bifunctional serine/threonine kinase and phosphorylase involved in the regulation of the pyruvate, phosphate dikinase (PPDK) by catalyzing its phosphorylation/dephosphorylation. This chain is Putative pyruvate, phosphate dikinase regulatory protein 2, found in Latilactobacillus sakei subsp. sakei (strain 23K) (Lactobacillus sakei subsp. sakei).